A 144-amino-acid chain; its full sequence is F420-non-reducing hydrogenase vhc iron-sulfur subunit D (144 aa).

This sequence belongs to the MvhD/VhuD family. As to quaternary structure, the F420-non-reducing hydrogenase vhc is composed of three subunits; VhcA, VhcD and VhcG. [2Fe-2S] cluster is required as a cofactor.

The polypeptide is F420-non-reducing hydrogenase vhc iron-sulfur subunit D (vhcD) (Methanococcus voltae).